The chain runs to 668 residues: Fructose-1,6-bisphosphatase class 3 (668 aa).

The protein belongs to the FBPase class 3 family. It depends on Mn(2+) as a cofactor.

The enzyme catalyses beta-D-fructose 1,6-bisphosphate + H2O = beta-D-fructose 6-phosphate + phosphate. It functions in the pathway carbohydrate biosynthesis; gluconeogenesis. The polypeptide is Fructose-1,6-bisphosphatase class 3 (Clostridium botulinum (strain 657 / Type Ba4)).